We begin with the raw amino-acid sequence, 196 residues long: Peptidyl-tRNA hydrolase (196 aa).

Tyrosine 18 contacts tRNA. The active-site Proton acceptor is the histidine 23. Positions 69, 71, and 117 each coordinate tRNA.

Belongs to the PTH family. Monomer.

The protein resides in the cytoplasm. It carries out the reaction an N-acyl-L-alpha-aminoacyl-tRNA + H2O = an N-acyl-L-amino acid + a tRNA + H(+). Functionally, hydrolyzes ribosome-free peptidyl-tRNAs (with 1 or more amino acids incorporated), which drop off the ribosome during protein synthesis, or as a result of ribosome stalling. Catalyzes the release of premature peptidyl moieties from peptidyl-tRNA molecules trapped in stalled 50S ribosomal subunits, and thus maintains levels of free tRNAs and 50S ribosomes. The protein is Peptidyl-tRNA hydrolase of Vibrio cholerae serotype O1 (strain ATCC 39315 / El Tor Inaba N16961).